The chain runs to 77 residues: Probable [Fe-S]-dependent transcriptional repressor (77 aa).

4 residues coordinate iron-sulfur cluster: C54, C59, C62, and C68.

Belongs to the FeoC family.

Functionally, may function as a transcriptional regulator that controls feoABC expression. The chain is Probable [Fe-S]-dependent transcriptional repressor from Proteus mirabilis (strain HI4320).